The following is a 236-amino-acid chain: Phosphoglycolate phosphatase (236 aa).

Asp14 serves as the catalytic Nucleophile. Residues Asp14, Asp16, and Asp177 each coordinate Mg(2+).

This sequence belongs to the HAD-like hydrolase superfamily. CbbY/CbbZ/Gph/YieH family. Mg(2+) is required as a cofactor.

It carries out the reaction 2-phosphoglycolate + H2O = glycolate + phosphate. It functions in the pathway organic acid metabolism; glycolate biosynthesis; glycolate from 2-phosphoglycolate: step 1/1. Specifically catalyzes the dephosphorylation of 2-phosphoglycolate. Is involved in the dissimilation of the intracellular 2-phosphoglycolate formed during the DNA repair of 3'-phosphoglycolate ends, a major class of DNA lesions induced by oxidative stress. This Neisseria gonorrhoeae (strain ATCC 700825 / FA 1090) protein is Phosphoglycolate phosphatase.